The primary structure comprises 1017 residues: Probable beta-galactosidase B (1017 aa).

An N-terminal signal peptide occupies residues 1-20 (MTRITKLCVLLLSSIGLLAA). N-linked (GlcNAc...) asparagine glycosylation occurs at asparagine 23. Tyrosine 90 is a substrate binding site. A glycan (N-linked (GlcNAc...) asparagine) is linked at asparagine 100. Residues asparagine 135, alanine 136, and glutamate 137 each contribute to the substrate site. The N-linked (GlcNAc...) asparagine glycan is linked to asparagine 158. A substrate-binding site is contributed by asparagine 195. Catalysis depends on glutamate 196, which acts as the Proton donor. A glycan (N-linked (GlcNAc...) asparagine) is linked at asparagine 211. Tyrosine 265 serves as a coordination point for substrate. Cysteine 271 and cysteine 324 are oxidised to a cystine. Residue glutamate 308 is the Nucleophile of the active site. Tyrosine 373 is a substrate binding site. Residues asparagine 411, asparagine 417, asparagine 456, asparagine 628, asparagine 681, asparagine 737, asparagine 770, asparagine 777, asparagine 785, asparagine 828, and asparagine 829 are each glycosylated (N-linked (GlcNAc...) asparagine).

It belongs to the glycosyl hydrolase 35 family.

It is found in the secreted. The catalysed reaction is Hydrolysis of terminal non-reducing beta-D-galactose residues in beta-D-galactosides.. In terms of biological role, cleaves beta-linked terminal galactosyl residues from gangliosides, glycoproteins, and glycosaminoglycans. This is Probable beta-galactosidase B (lacB) from Aspergillus niger (strain ATCC MYA-4892 / CBS 513.88 / FGSC A1513).